We begin with the raw amino-acid sequence, 116 residues long: Holo-[acyl-carrier-protein] synthase (116 aa).

Mg(2+)-binding residues include Asp8 and Glu50.

It belongs to the P-Pant transferase superfamily. AcpS family. Requires Mg(2+) as cofactor.

The protein resides in the cytoplasm. The enzyme catalyses apo-[ACP] + CoA = holo-[ACP] + adenosine 3',5'-bisphosphate + H(+). In terms of biological role, transfers the 4'-phosphopantetheine moiety from coenzyme A to a Ser of acyl-carrier-protein. The protein is Holo-[acyl-carrier-protein] synthase of Beutenbergia cavernae (strain ATCC BAA-8 / DSM 12333 / CCUG 43141 / JCM 11478 / NBRC 16432 / NCIMB 13614 / HKI 0122).